The sequence spans 396 residues: MSDVFKKFLKLEAASGIILIMAAVLAMILANSGLASGYQAFLDTPVQVRIAALDINKPLLLWINDGFMAIFFLLVGLEVKREMLEGALSSRVQATFPAIAAVGGMLAPALIYTFFNYSDEAARAGWAIPAATDIAFALGVMALLGKRVPVSLKVFLLALAIMDDLGVIIIIALFYTQQLSLEALAVGILATLTLLWMNRRGEDRIGLYMLVGLVLWVAVLKSGVHATLAGVVVGFMIPLNGKRYASPLKHLEHALHPWSAYLILPLFAFANAGVSLDGIGLSSLLSPVPMGIMLGLFVGKPLGVFTISWLSVKLGIAQLPSGVNFKQIFAVSILCGIGFTMSMFIASLAFEHGGLDYGSYSRLGILVGSTLAAVVGYLALRMSLPNREADQSTEGL.

The next 11 helical transmembrane spans lie at 14 to 34 (ASGI…NSGL), 59 to 79 (LLLW…GLEV), 95 to 115 (TFPA…YTFF), 124 to 144 (AGWA…MALL), 154 to 174 (VFLL…IALF), 178 to 198 (QLSL…LWMN), 205 to 225 (IGLY…SGVH), 254 to 274 (ALHP…NAGV), 278 to 298 (GIGL…GLFV), 328 to 348 (IFAV…IASL), and 363 to 383 (LGIL…LRMS).

Belongs to the NhaA Na(+)/H(+) (TC 2.A.33) antiporter family.

It is found in the cell inner membrane. The enzyme catalyses Na(+)(in) + 2 H(+)(out) = Na(+)(out) + 2 H(+)(in). Functionally, na(+)/H(+) antiporter that extrudes sodium in exchange for external protons. The protein is Na(+)/H(+) antiporter NhaA of Aeromonas salmonicida (strain A449).